A 707-amino-acid polypeptide reads, in one-letter code: Elongation factor G (707 aa).

The 290-residue stretch at 8–297 folds into the tr-type G domain; it reads ERVRNIGIAA…AVLDYLPSPL (290 aa). Residues 17-24, 96-100, and 150-153 contribute to the GTP site; these read AHIDAGKT, DTPGH, and NKMD.

Belongs to the TRAFAC class translation factor GTPase superfamily. Classic translation factor GTPase family. EF-G/EF-2 subfamily.

Its subcellular location is the cytoplasm. Functionally, catalyzes the GTP-dependent ribosomal translocation step during translation elongation. During this step, the ribosome changes from the pre-translocational (PRE) to the post-translocational (POST) state as the newly formed A-site-bound peptidyl-tRNA and P-site-bound deacylated tRNA move to the P and E sites, respectively. Catalyzes the coordinated movement of the two tRNA molecules, the mRNA and conformational changes in the ribosome. In Gloeobacter violaceus (strain ATCC 29082 / PCC 7421), this protein is Elongation factor G.